Reading from the N-terminus, the 539-residue chain is Protein TIC 55, chloroplastic (539 aa).

A chloroplast-targeting transit peptide spans 1–50 (MAVPFLSSSLQLTPTSPILFTKVTPTPIIHNHRSTCTIPTKPRLRLLRRS). Ala-51 bears the N-acetylalanine mark. Topologically, residues 51–482 (AVAGTAVSDQ…VIKSFELWKN (432 aa)) are stromal. The Rieske domain maps to 88-193 (WYPLYLTKNV…VKDSQGVVWV (106 aa)). 4 residues coordinate [2Fe-2S] cluster: Cys-129, His-131, Cys-148, and His-151. Residues His-242 and His-247 each coordinate Fe cation. Positions 467–470 (CRSC) match the Redox-active motif motif. A helical membrane pass occupies residues 483–500 (ILSATAVALTALAILVVS). Residues 501 to 504 (RQWK) lie on the Chloroplast intermembrane side of the membrane. A helical transmembrane segment spans residues 505 to 527 (AVLLGSAALCSAAAYTCLRAINL). Over 528 to 539 (NTNNFIRTHRRL) the chain is Stromal.

In terms of assembly, part of the Tic complex. Interacts with TIC62 and TIC110. The cofactor is [2Fe-2S] cluster. Highly expressed in green tissues and very low levels in non-photosynthetic tissues such as roots and etiolated seedlings.

It localises to the plastid. Its subcellular location is the chloroplast inner membrane. In terms of biological role, involved in protein precursor import into chloroplasts. Part of the redox regulon consisting of TIC32, TIC 55 and TIC62. The chain is Protein TIC 55, chloroplastic (TIC55) from Arabidopsis thaliana (Mouse-ear cress).